The chain runs to 367 residues: Putative S-adenosyl-L-methionine-dependent methyltransferase MT0751 (367 aa).

Residues Asp137 and 166-167 (DL) contribute to the S-adenosyl-L-methionine site. The span at 348 to 358 (TRSDAHQASTT) shows a compositional bias: polar residues. The segment at 348–367 (TRSDAHQASTTAPPPPGLTG) is disordered.

This sequence belongs to the UPF0677 family.

Exhibits S-adenosyl-L-methionine-dependent methyltransferase activity. The chain is Putative S-adenosyl-L-methionine-dependent methyltransferase MT0751 from Mycobacterium tuberculosis (strain CDC 1551 / Oshkosh).